Reading from the N-terminus, the 765-residue chain is Single-minded homolog 1 (765 aa).

Residues methionine 1–arginine 53 form the bHLH domain. 2 PAS domains span residues glycine 77–histidine 147 and proline 218–glycine 288. A PAC domain is found at threonine 292 to threonine 335. Residues glutamate 336–serine 765 enclose the Single-minded C-terminal domain. 2 stretches are compositionally biased toward low complexity: residues proline 352–serine 365 and serine 373–serine 385. Disordered stretches follow at residues proline 352–glutamine 428 and tryptophan 527–proline 560. A Nuclear localization signal motif is present at residues arginine 368 to tyrosine 387. A compositionally biased stretch (basic and acidic residues) spans histidine 394–serine 404.

In terms of assembly, efficient DNA binding requires dimerization with another bHLH protein. Heterodimer; forms a heterodimer with ARNT, ARNT2. As to expression, detected in lung, skeletal muscle and kidney. During fetal development it is found in the CNS, developing kidney, mesodermal and endodermal tissues, including developing somites, mesonephric duct, and foregut.

It localises to the nucleus. Transcriptional factor that may have pleiotropic effects during embryogenesis and in the adult. The chain is Single-minded homolog 1 (Sim1) from Mus musculus (Mouse).